The chain runs to 162 residues: tRNA (cytidine(34)-2'-O)-methyltransferase (162 aa).

S-adenosyl-L-methionine-binding residues include Leu83, Gly105, Ile127, and Ser135.

Belongs to the class IV-like SAM-binding methyltransferase superfamily. RNA methyltransferase TrmH family. TrmL subfamily. Homodimer.

The protein localises to the cytoplasm. The catalysed reaction is cytidine(34) in tRNA + S-adenosyl-L-methionine = 2'-O-methylcytidine(34) in tRNA + S-adenosyl-L-homocysteine + H(+). It carries out the reaction 5-carboxymethylaminomethyluridine(34) in tRNA(Leu) + S-adenosyl-L-methionine = 5-carboxymethylaminomethyl-2'-O-methyluridine(34) in tRNA(Leu) + S-adenosyl-L-homocysteine + H(+). Functionally, methylates the ribose at the nucleotide 34 wobble position in the two leucyl isoacceptors tRNA(Leu)(CmAA) and tRNA(Leu)(cmnm5UmAA). Catalyzes the methyl transfer from S-adenosyl-L-methionine to the 2'-OH of the wobble nucleotide. The chain is tRNA (cytidine(34)-2'-O)-methyltransferase from Photorhabdus asymbiotica subsp. asymbiotica (strain ATCC 43949 / 3105-77) (Xenorhabdus luminescens (strain 2)).